The following is a 211-amino-acid chain: Thiamine-phosphate synthase (211 aa).

4-amino-2-methyl-5-(diphosphooxymethyl)pyrimidine is bound by residues 37–41 and Asn-69; that span reads QLRIK. Residues Asp-70 and Asp-89 each contribute to the Mg(2+) site. Ser-108 is a 4-amino-2-methyl-5-(diphosphooxymethyl)pyrimidine binding site. 134–136 is a 2-[(2R,5Z)-2-carboxy-4-methylthiazol-5(2H)-ylidene]ethyl phosphate binding site; sequence TQT. Lys-137 serves as a coordination point for 4-amino-2-methyl-5-(diphosphooxymethyl)pyrimidine. 2-[(2R,5Z)-2-carboxy-4-methylthiazol-5(2H)-ylidene]ethyl phosphate is bound by residues Gly-166 and 186–187; that span reads VS.

Belongs to the thiamine-phosphate synthase family. Requires Mg(2+) as cofactor.

It carries out the reaction 2-[(2R,5Z)-2-carboxy-4-methylthiazol-5(2H)-ylidene]ethyl phosphate + 4-amino-2-methyl-5-(diphosphooxymethyl)pyrimidine + 2 H(+) = thiamine phosphate + CO2 + diphosphate. The catalysed reaction is 2-(2-carboxy-4-methylthiazol-5-yl)ethyl phosphate + 4-amino-2-methyl-5-(diphosphooxymethyl)pyrimidine + 2 H(+) = thiamine phosphate + CO2 + diphosphate. It catalyses the reaction 4-methyl-5-(2-phosphooxyethyl)-thiazole + 4-amino-2-methyl-5-(diphosphooxymethyl)pyrimidine + H(+) = thiamine phosphate + diphosphate. The protein operates within cofactor biosynthesis; thiamine diphosphate biosynthesis; thiamine phosphate from 4-amino-2-methyl-5-diphosphomethylpyrimidine and 4-methyl-5-(2-phosphoethyl)-thiazole: step 1/1. Condenses 4-methyl-5-(beta-hydroxyethyl)thiazole monophosphate (THZ-P) and 2-methyl-4-amino-5-hydroxymethyl pyrimidine pyrophosphate (HMP-PP) to form thiamine monophosphate (TMP). The protein is Thiamine-phosphate synthase of Salmonella dublin (strain CT_02021853).